A 430-amino-acid chain; its full sequence is Toxin coregulated pilus biosynthesis protein B (430 aa).

Polar residues predominate over residues 351-366 (NFSSESAKDSQGTTQK). Residues 351–371 (NFSSESAKDSQGTTQKDGSKG) form a disordered region.

Functionally, involved in TCP pilus biogenesis. This Vibrio cholerae serotype O1 (strain ATCC 39315 / El Tor Inaba N16961) protein is Toxin coregulated pilus biosynthesis protein B (tcpB).